Reading from the N-terminus, the 1400-residue chain is Tensin-2 (1400 aa).

The Phorbol-ester/DAG-type zinc finger occupies 31-79; sequence PHSFREKVFRKKTPVCAVCKVTIDGTGVSCRVCKVATHRKCEAKVTSSC. The residue at position 91 (Thr91) is a Phosphothreonine. 2 positions are modified to phosphoserine: Ser118 and Ser120. Residues 122 to 294 enclose the Phosphatase tensin-type domain; that stretch reads DPLMERRWDL…SYFSGLLSGS (173 aa). Residue Cys231 is the Phosphocysteine intermediate of the active site. The 127-residue stretch at 299-425 folds into the C2 tensin-type domain; that stretch reads SSPLFLHYVF…ASVEFVFSSS (127 aa). The interval 425–444 is disordered; sequence SPEKVKGNTPRNDPSVSVDY. The span at 433–444 shows a compositional bias: polar residues; sequence TPRNDPSVSVDY. Ser455 carries the phosphoserine modification. The residue at position 456 (Tyr456) is a Phosphotyrosine. Ser466 carries the post-translational modification Phosphoserine. At Thr474 the chain carries Phosphothreonine. At Ser481 the chain carries Phosphoserine. Position 483 is a phosphotyrosine (Tyr483). Residues 488-536 form a disordered region; it reads RVPRQTPPAPSPELPPPPMLSVSSDSGHSSTLTTEHTAESPGRPPPTAA. A compositionally biased stretch (pro residues) spans 492 to 506; sequence QTPPAPSPELPPPPM. Arg555 bears the Omega-N-methylarginine mark. The segment at 809–1114 is disordered; the sequence is CGSPSEGRGY…DVTQPPEHPL (306 aa). Phosphoserine is present on residues Ser820, Ser825, Ser830, Ser832, and Ser835. Polar residues-rich tracts occupy residues 898–917 and 929–940; these read CSAS…SSPV and TRSPSLAPTQRL. Thr909 is modified (phosphothreonine). A phosphoserine mark is found at Ser931, Ser941, and Ser972. Residue Thr977 is modified to Phosphothreonine. Phosphoserine is present on residues Ser991 and Ser1003. Pro residues predominate over residues 1046–1056; it reads PEPPQSSPTPA. Positions 1082 to 1098 are enriched in polar residues; it reads SGQQPSPPARSTNQHVT. Ser1087 is subject to Phosphoserine. The SH2 domain maps to 1131 to 1238; the sequence is WYKPHLSRDQ…SLPCCLRIPS (108 aa). Thr1173 is modified (phosphothreonine). At Ser1238 the chain carries Phosphoserine. The 134-residue stretch at 1266 to 1399 folds into the PTB domain; sequence ACSVLYLTSV…FITKVLLGQR (134 aa).

It belongs to the PTEN phosphatase protein family. Interacts with AXL. Interacts with SYK; leading to its phosphorylation. Interacts with SQSTM1 (via PB1 domain); the interaction leads to sequestration of TNS2 in cytoplasmic aggregates with SQSTM1 and promotes TNS2 ubiquitination and proteasomal degradation. Ubiquitinated following sequestration in cytoplasmic aggregates with SQSTM1, leading to proteasomal degradation. In the adult kidney, expressed mainly in glomeruli (at protein level). In the newborn kidney, localizes on the basal surface of podocytes along the glomerular basement membrane and not in endothelial cells. Low expression levels in anabolic skeletal muscles.

It localises to the cell junction. It is found in the focal adhesion. The protein localises to the cell membrane. Its subcellular location is the cytoplasm. The catalysed reaction is O-phospho-L-tyrosyl-[protein] + H2O = L-tyrosyl-[protein] + phosphate. Tyrosine-protein phosphatase which regulates cell motility, proliferation and muscle-response to insulin. Phosphatase activity is mediated by binding to phosphatidylinositol-3,4,5-triphosphate (PtdIns(3,4,5)P3) via the SH2 domain. In muscles and under catabolic conditions, dephosphorylates IRS1 leading to its degradation and muscle atrophy. Negatively regulates PI3K-AKT pathway activation. Dephosphorylates nephrin NPHS1 in podocytes which affects mTORC1 complex activity. Under normal glucose conditions, NPHS1 outcompetes IRS1 for binding to phosphatidylinositol 3-kinase (PI3K) which balances mTORC1 activity but high glucose conditions lead to up-regulation of TNS2, increased NPHS1 dephosphorylation and activation of mTORC1, contributing to podocyte hypertrophy and proteinuria. Required for correct podocyte morphology, podocyte-glomerular basement membrane interaction and integrity of the glomerular filtration barrier. Enhances RHOA activation in the presence of DLC1. Plays a role in promoting DLC1-dependent remodeling of the extracellular matrix. The protein is Tensin-2 (Tns2) of Mus musculus (Mouse).